The following is a 134-amino-acid chain: Small ribosomal subunit protein bS16 (134 aa).

Positions 79–134 are disordered; it reads AGIAKRPSRNNPTKGEPGKKAQERLALAKQAEEEASAKAAEAAAAAAAPAEEAASE. Over residues 115–134 the composition is skewed to low complexity; the sequence is AKAAEAAAAAAAPAEEAASE.

Belongs to the bacterial ribosomal protein bS16 family.

The chain is Small ribosomal subunit protein bS16 from Brucella abortus (strain S19).